The primary structure comprises 144 residues: Large ribosomal subunit protein uL13 (144 aa).

This sequence belongs to the universal ribosomal protein uL13 family. In terms of assembly, part of the 50S ribosomal subunit.

Functionally, this protein is one of the early assembly proteins of the 50S ribosomal subunit, although it is not seen to bind rRNA by itself. It is important during the early stages of 50S assembly. This is Large ribosomal subunit protein uL13 from Nitrosomonas eutropha (strain DSM 101675 / C91 / Nm57).